The primary structure comprises 602 residues: Leishmanolysin (602 aa).

A signal peptide spans 1–39; sequence MSVDSSSTHRRRCVAARLVRLAAAGAAVTVAVGTAAAWA. Positions 40-100 are cleaved as a propeptide — activation peptide; sequence HAGALQHRCV…DPRPGSARSV (61 aa). 2 disulfides stabilise this stretch: Cys-125/Cys-142 and Cys-191/Cys-230. His-264 contributes to the Zn(2+) binding site. Glu-265 is a catalytic residue. His-268 serves as a coordination point for Zn(2+). Asn-300 carries an N-linked (GlcNAc...) asparagine glycan. 7 cysteine pairs are disulfide-bonded: Cys-314/Cys-386, Cys-393/Cys-455, Cys-406/Cys-425, Cys-415/Cys-489, Cys-466/Cys-510, Cys-515/Cys-565, and Cys-535/Cys-558. His-334 provides a ligand contact to Zn(2+). Residue Asn-407 is glycosylated (N-linked (GlcNAc...) asparagine). Asn-534 is a glycosylation site (N-linked (GlcNAc...) asparagine). Asn-577 carries GPI-anchor amidated asparagine lipidation. The propeptide at 578 to 602 is removed in mature form; that stretch reads TAAGRRGPRAAATALLVAALLAVAL.

It belongs to the peptidase M8 family. Zn(2+) is required as a cofactor. The phosphatidylinositol moiety of the GPI-anchor contains a fully saturated, unbranched 1-O-alkyl chain (mainly C24:0) and a mixture of fully saturated unbranched 2-O-acyl chains (C12:0, C14:0, C16:0, and C18:0).

The protein resides in the cell membrane. It catalyses the reaction Preference for hydrophobic residues at P1 and P1' and basic residues at P2' and P3'. A model nonapeptide is cleaved at -Ala-Tyr-|-Leu-Lys-Lys-.. In terms of biological role, has an integral role during the infection of macrophages in the mammalian host. In Leishmania major, this protein is Leishmanolysin (gp63).